Here is an 88-residue protein sequence, read N- to C-terminus: Small ribosomal subunit protein uS17 (88 aa).

It belongs to the universal ribosomal protein uS17 family. Part of the 30S ribosomal subunit.

Functionally, one of the primary rRNA binding proteins, it binds specifically to the 5'-end of 16S ribosomal RNA. The polypeptide is Small ribosomal subunit protein uS17 (Oleidesulfovibrio alaskensis (strain ATCC BAA-1058 / DSM 17464 / G20) (Desulfovibrio alaskensis)).